Consider the following 71-residue polypeptide: Ceratotoxin-A (71 aa).

Residues 1–23 form the signal peptide; sequence MANLKAVFLICIVAFIAFQCVVA. 2 consecutive propeptides follow at residues 24–35 and 65–71; these read EPAAEDSIVVKR and VAAGLVG.

In terms of assembly, homomer of four to six subunits.

Its subcellular location is the secreted. Its function is as follows. Female-specific peptides with potent activity against Gram-positive and Gram-negative bacteria. They have as well hemolytic activity. The protein is Ceratotoxin-A (CTXA2) of Ceratitis capitata (Mediterranean fruit fly).